Reading from the N-terminus, the 103-residue chain is Co-chaperonin GroES (103 aa).

This sequence belongs to the GroES chaperonin family. As to quaternary structure, heptamer of 7 subunits arranged in a ring. Interacts with the chaperonin GroEL.

It is found in the cytoplasm. Together with the chaperonin GroEL, plays an essential role in assisting protein folding. The GroEL-GroES system forms a nano-cage that allows encapsulation of the non-native substrate proteins and provides a physical environment optimized to promote and accelerate protein folding. GroES binds to the apical surface of the GroEL ring, thereby capping the opening of the GroEL channel. The sequence is that of Co-chaperonin GroES from Synechocystis sp. (strain ATCC 27184 / PCC 6803 / Kazusa).